The sequence spans 477 residues: Glycogen synthase (477 aa).

Residue Lys15 participates in ADP-alpha-D-glucose binding.

It belongs to the glycosyltransferase 1 family. Bacterial/plant glycogen synthase subfamily.

The catalysed reaction is [(1-&gt;4)-alpha-D-glucosyl](n) + ADP-alpha-D-glucose = [(1-&gt;4)-alpha-D-glucosyl](n+1) + ADP + H(+). Its pathway is glycan biosynthesis; glycogen biosynthesis. Functionally, synthesizes alpha-1,4-glucan chains using ADP-glucose. This chain is Glycogen synthase, found in Shigella dysenteriae serotype 1 (strain Sd197).